Reading from the N-terminus, the 124-residue chain is Small ribosomal subunit protein uS12 (124 aa).

Asp-89 bears the 3-methylthioaspartic acid mark.

This sequence belongs to the universal ribosomal protein uS12 family. Part of the 30S ribosomal subunit. Contacts proteins S8 and S17. May interact with IF1 in the 30S initiation complex.

With S4 and S5 plays an important role in translational accuracy. Its function is as follows. Interacts with and stabilizes bases of the 16S rRNA that are involved in tRNA selection in the A site and with the mRNA backbone. Located at the interface of the 30S and 50S subunits, it traverses the body of the 30S subunit contacting proteins on the other side and probably holding the rRNA structure together. The combined cluster of proteins S8, S12 and S17 appears to hold together the shoulder and platform of the 30S subunit. In Buchnera aphidicola subsp. Schizaphis graminum (strain Sg), this protein is Small ribosomal subunit protein uS12.